The chain runs to 929 residues: von Willebrand factor C and EGF domain-containing protein (929 aa).

An N-terminal signal peptide occupies residues 1-21 (MWARLLLHVAYILIPLLGSSA). The 29-residue stretch at 70-98 (LCSFGCGSGICIAPNVCSCQDGEQGATCP) folds into the EGF-like 1 domain. The EGF-like 2; calcium-binding domain maps to 142-180 (DIDECLSSSCEGHCVNTEGGFVCECGPGMQLSADRHSCQ). 9 disulfide bridges follow: Cys146–Cys155, Cys151–Cys164, Cys166–Cys179, Cys185–Cys194, Cys190–Cys203, Cys205–Cys218, Cys224–Cys237, Cys233–Cys246, and Cys248–Cys261. Residues 181 to 219 (DTDECLGTPCQQRCKNSIGSYKCSCRAGFHLHGNRHSCI) form the EGF-like 3; calcium-binding domain. Residues 220 to 262 (DVNECRRPQERRVCHHTCHNTVGSFLCTCRPGFRLRSDRVSCE) form the EGF-like 4; calcium-binding domain. Disordered regions lie at residues 291 to 317 (AGRP…RTIS) and 339 to 374 (PSSS…LGAG). Residues 339 to 353 (PSSSPLGTLGPPSLL) show a composition bias toward low complexity. VWFC domains follow at residues 376-433 (SSCW…PSCT), 433-494 (TGCF…GRCY), 491-552 (GRCY…FTCR), 558-618 (TGCS…PDCS), 619-677 (AGCT…PVCH), and 677-762 (HDCN…VNCS). 2 N-linked (GlcNAc...) asparagine glycosylation sites follow: Asn454 and Asn464. The tract at residues 731 to 774 (PLEEKQQPSPHGELAKAARNARGDTEVPVNCSSCPGPPSASPTR) is disordered. Residues 743–755 (ELAKAARNARGDT) show a composition bias toward basic and acidic residues. An N-linked (GlcNAc...) asparagine glycan is attached at Asn787. A compositionally biased stretch (polar residues) spans 791–807 (IQSASPSPPIAQTSSSP). Disordered stretches follow at residues 791-861 (IQSA…SSTF) and 879-929 (AETP…NSTI). Positions 889 to 903 (LSETLTTSSSSQRLS) are enriched in low complexity.

It is found in the secreted. Its function is as follows. May be a regulatory element in the beta-catenin signaling pathway and a target for chemoprevention of hapatocellular carcinoma. This is von Willebrand factor C and EGF domain-containing protein (Vwce) from Mus musculus (Mouse).